The following is a 342-amino-acid chain: Dihydroorotate dehydrogenase (quinone) (342 aa).

Residues 60 to 64 (AGFDK) and T84 contribute to the FMN site. Substrate is bound at residue K64. Residue 109 to 113 (NRMGF) participates in substrate binding. 2 residues coordinate FMN: N137 and N170. N170 serves as a coordination point for substrate. The active-site Nucleophile is S173. N175 is a substrate binding site. FMN is bound by residues K215 and T243. Substrate is bound at residue 244 to 245 (NT). Residues G266, G295, and 316-317 (YT) each bind FMN.

This sequence belongs to the dihydroorotate dehydrogenase family. Type 2 subfamily. Monomer. The cofactor is FMN.

The protein localises to the cell membrane. It catalyses the reaction (S)-dihydroorotate + a quinone = orotate + a quinol. The protein operates within pyrimidine metabolism; UMP biosynthesis via de novo pathway; orotate from (S)-dihydroorotate (quinone route): step 1/1. Its function is as follows. Catalyzes the conversion of dihydroorotate to orotate with quinone as electron acceptor. In Halorhodospira halophila (strain DSM 244 / SL1) (Ectothiorhodospira halophila (strain DSM 244 / SL1)), this protein is Dihydroorotate dehydrogenase (quinone).